Here is a 373-residue protein sequence, read N- to C-terminus: Queuine tRNA-ribosyltransferase (373 aa).

The active-site Proton acceptor is the Asp89. Substrate-binding positions include 89–93 (DSGGF), Asp143, Gln187, and Gly214. Residues 245 to 251 (GVGKPED) form an RNA binding region. Asp264 functions as the Nucleophile in the catalytic mechanism. The RNA binding; important for wobble base 34 recognition stretch occupies residues 269 to 273 (TRNAR). Zn(2+) contacts are provided by Cys302, Cys304, Cys307, and His333.

Belongs to the queuine tRNA-ribosyltransferase family. As to quaternary structure, homodimer. Within each dimer, one monomer is responsible for RNA recognition and catalysis, while the other monomer binds to the replacement base PreQ1. The cofactor is Zn(2+).

The catalysed reaction is 7-aminomethyl-7-carbaguanine + guanosine(34) in tRNA = 7-aminomethyl-7-carbaguanosine(34) in tRNA + guanine. The protein operates within tRNA modification; tRNA-queuosine biosynthesis. Its function is as follows. Catalyzes the base-exchange of a guanine (G) residue with the queuine precursor 7-aminomethyl-7-deazaguanine (PreQ1) at position 34 (anticodon wobble position) in tRNAs with GU(N) anticodons (tRNA-Asp, -Asn, -His and -Tyr). Catalysis occurs through a double-displacement mechanism. The nucleophile active site attacks the C1' of nucleotide 34 to detach the guanine base from the RNA, forming a covalent enzyme-RNA intermediate. The proton acceptor active site deprotonates the incoming PreQ1, allowing a nucleophilic attack on the C1' of the ribose to form the product. After dissociation, two additional enzymatic reactions on the tRNA convert PreQ1 to queuine (Q), resulting in the hypermodified nucleoside queuosine (7-(((4,5-cis-dihydroxy-2-cyclopenten-1-yl)amino)methyl)-7-deazaguanosine). The protein is Queuine tRNA-ribosyltransferase of Tolumonas auensis (strain DSM 9187 / NBRC 110442 / TA 4).